Here is a 188-residue protein sequence, read N- to C-terminus: Apolipoprotein M (188 aa).

The not cleaved signal peptide spans 1 to 22 (MFHQIWAALLYFYGIILNSIYQ). Cystine bridges form between cysteine 23-cysteine 167, cysteine 95-cysteine 183, and cysteine 128-cysteine 157. The N-linked (GlcNAc...) asparagine glycan is linked to asparagine 135. Residues glutamate 136 and arginine 143 each coordinate tetradecanoate.

Belongs to the calycin superfamily. Lipocalin family. Highly divergent. In terms of assembly, interacts with LRP2; LRP2 mediates APOM renal uptake and subsequent lysosomal degradation. As to expression, plasma protein. Expressed in liver and kidney.

The protein resides in the secreted. Probably involved in lipid transport. Can bind sphingosine-1-phosphate, myristic acid, palmitic acid and stearic acid, retinol, all-trans-retinoic acid and 9-cis-retinoic acid. This is Apolipoprotein M (APOM) from Homo sapiens (Human).